The following is a 353-amino-acid chain: Protein RecA (353 aa).

Residue 65–72 (GPESSGKT) coordinates ATP. Basic and acidic residues predominate over residues 334 to 345 (DAERAGAEREDN). Positions 334–353 (DAERAGAEREDNAAADDENF) are disordered.

It belongs to the RecA family.

It localises to the cytoplasm. In terms of biological role, can catalyze the hydrolysis of ATP in the presence of single-stranded DNA, the ATP-dependent uptake of single-stranded DNA by duplex DNA, and the ATP-dependent hybridization of homologous single-stranded DNAs. It interacts with LexA causing its activation and leading to its autocatalytic cleavage. This Edwardsiella ictaluri (strain 93-146) protein is Protein RecA.